A 1214-amino-acid polypeptide reads, in one-letter code: Protein argonaute-2 (1214 aa).

A disordered region spans residues 1–412; that stretch reads MGKKDKNKKG…GSIKRGTIGK (412 aa). Composition is skewed to low complexity over residues 18–93 and 107–117; these read PQPQ…QQKS and KQQVQGWTKQG. Composition is skewed to gly residues over residues 118 to 131, 141 to 154, 164 to 177, 187 to 200, 210 to 223, 233 to 246, and 256 to 269; these read QQGG…GQDG and QQGG…GQEG. A compositionally biased stretch (low complexity) spans 270–282; that stretch reads GYQQRPPGQQQGG. Gly residues-rich tracts occupy residues 302–315, 325–338, and 348–361; these read QQGG…GQEG. A compositionally biased stretch (low complexity) spans 362 to 394; the sequence is GYQQRPPGQQPNQTQSQGQYQSRGPPQQQQAAP. In terms of domain architecture, PAZ spans 608 to 717; the sequence is LERFSLKAKI…LPIELCSIEE (110 aa). The segment at 681–686 is interaction with guide RNA; it reads YFHSRN. The region spanning 885–1186 is the Piwi domain; that stretch reads LAIVIIPQFR…ARGRVYLTGT (302 aa). Residues D965 and D1037 each contribute to the a divalent metal cation site. Interaction with guide RNA stretches follow at residues 1075–1076, 1119–1127, and 1156–1178; these read KR, HQAIQGTAK, and FPRC…VAAR. H1173 lines the a divalent metal cation pocket.

The protein belongs to the argonaute family. Ago subfamily. As to quaternary structure, interacts with Fmr1, Dcr-1 and vig to form the RNA-induced silencing complex (RISC), a ribonucleoprotein (RNP) complex involved in translation regulation, other components of the complex are RpL5, RpL11 and Rm62. As part of the RISC complex, interacts with Tudor-SN. Interacts with Taf11. (Microbial infection) Interacts with cricket paralysis virus protein 1A; this interaction may block the RISC activity. The cofactor is Mg(2+). Requires Mn(2+) as cofactor.

It localises to the nucleus. Its subcellular location is the cytoplasm. The protein resides in the cytoplasmic ribonucleoprotein granule. In terms of biological role, essential for RNA interference (RNAi); double-stranded RNA induces potent and specific gene silencing. RNAi is mediated by the RNA-induced silencing complex (RISC), a sequence-specific, multicomponent nuclease that destroys or silences messenger RNAs homologous to the silencing trigger. This Drosophila melanogaster (Fruit fly) protein is Protein argonaute-2.